The following is a 557-amino-acid chain: Formate--tetrahydrofolate ligase (557 aa).

66–73 (TPAGEGKT) serves as a coordination point for ATP.

Belongs to the formate--tetrahydrofolate ligase family.

It catalyses the reaction (6S)-5,6,7,8-tetrahydrofolate + formate + ATP = (6R)-10-formyltetrahydrofolate + ADP + phosphate. The protein operates within one-carbon metabolism; tetrahydrofolate interconversion. This chain is Formate--tetrahydrofolate ligase, found in Bartonella tribocorum (strain CIP 105476 / IBS 506).